A 207-amino-acid chain; its full sequence is MPKVALLNQTGTQVGDIELADAVFGIEPNEAVVYDAIVMQQASRRQGTHDTKGRSEVRGGGRKPWKQKGTGRARQGSIRSPQWVGGGTVFGPTPRSYAYKLPKKVRRLALRSALSSKVANNEFIVLEGLTIDAPKTKDMISVFAALSIERKVLVVTADYNETVVLSTRNIPGVTVVDAAGVNVLDLVAHDKVIFTKDAVARVEEVLA.

Residues 43-85 are disordered; sequence SRRQGTHDTKGRSEVRGGGRKPWKQKGTGRARQGSIRSPQWVG. Positions 47-59 are enriched in basic and acidic residues; sequence GTHDTKGRSEVRG. The segment covering 60–71 has biased composition (basic residues); sequence GGRKPWKQKGTG.

Belongs to the universal ribosomal protein uL4 family. As to quaternary structure, part of the 50S ribosomal subunit.

One of the primary rRNA binding proteins, this protein initially binds near the 5'-end of the 23S rRNA. It is important during the early stages of 50S assembly. It makes multiple contacts with different domains of the 23S rRNA in the assembled 50S subunit and ribosome. In terms of biological role, forms part of the polypeptide exit tunnel. The chain is Large ribosomal subunit protein uL4 from Exiguobacterium sibiricum (strain DSM 17290 / CCUG 55495 / CIP 109462 / JCM 13490 / 255-15).